We begin with the raw amino-acid sequence, 129 residues long: Large ribosomal subunit protein bL20 (129 aa).

The protein belongs to the bacterial ribosomal protein bL20 family.

Binds directly to 23S ribosomal RNA and is necessary for the in vitro assembly process of the 50S ribosomal subunit. It is not involved in the protein synthesizing functions of that subunit. The protein is Large ribosomal subunit protein bL20 of Mycolicibacterium gilvum (strain PYR-GCK) (Mycobacterium gilvum (strain PYR-GCK)).